A 99-amino-acid chain; its full sequence is SAGA-associated factor 11 (99 aa).

The SGF11-type zinc finger occupies 71 to 92 (IHCENCGRDVSANRLAAHLQRC).

The protein belongs to the SGF11 family. Component of the 1.8 MDa SAGA transcription coactivator-HAT complex. SAGA is built of 5 distinct domains with specialized functions. Within the SAGA complex, SUS1, SGF11, SGF73 and UBP8 form an additional subcomplex of SAGA called the DUB module (deubiquitination module). Interacts directly with SGF73, SUS1 and UBP8.

Its subcellular location is the nucleus. Functions as a component of the transcription regulatory histone acetylation (HAT) complex SAGA. At the promoters, SAGA is required for recruitment of the basal transcription machinery. It influences RNA polymerase II transcriptional activity through different activities such as TBP interaction and promoter selectivity, interaction with transcription activators, and chromatin modification through histone acetylation and deubiquitination. SAGA acetylates nucleosomal histone H3 to some extent (to form H3K9ac, H3K14ac, H3K18ac and H3K23ac). SAGA interacts with DNA via upstream activating sequences (UASs). Involved in transcriptional regulation of a subset of SAGA-regulated genes. Within the SAGA complex, participates in a subcomplex, that specifically deubiquitinates histones H2B. The chain is SAGA-associated factor 11 from Saccharomyces cerevisiae (strain YJM789) (Baker's yeast).